A 389-amino-acid chain; its full sequence is uncharacterized protein (389 aa).

Polar residues predominate over residues 1–12 (MVHATSQSASTE). Disordered regions lie at residues 1–49 (MVHA…DEDL) and 86–111 (HKSM…ANRA). A compositionally biased stretch (acidic residues) spans 40-49 (ESGDEYDEDL). A compositionally biased stretch (basic residues) spans 93–110 (RGKKKRGKTAKKAKKANR).

This is an uncharacterized protein from Caenorhabditis elegans.